The following is a 117-amino-acid chain: Ig heavy chain V region 102 (117 aa).

An N-terminal signal peptide occupies residues 1-19 (MGWSCIILFLVATATGVHS). The segment at 20 to 49 (HVQLQQPGAELVKPGASVKVSCKASGYTFT) is framework-1. Cys-41 and Cys-115 form a disulfide bridge. The tract at residues 50–54 (SYWMH) is complementarity-determining-1. The tract at residues 55-68 (WVKQRPGQGLEWIG) is framework-2. Residues 69-85 (RIHPSDSDTNYNQKFKG) are complementarity-determining-2. The tract at residues 86-117 (KATLTVDKSSSTAYMQLSSLTSEDSAVYYCAI) is framework-3.

The polypeptide is Ig heavy chain V region 102 (Mus musculus (Mouse)).